The sequence spans 441 residues: UDP-N-acetylglucosamine 1-carboxyvinyltransferase 1 (441 aa).

42-43 (KN) contributes to the phosphoenolpyruvate binding site. Residue R117 coordinates UDP-N-acetyl-alpha-D-glucosamine. C141 (proton donor) is an active-site residue. The residue at position 141 (C141) is a 2-(S-cysteinyl)pyruvic acid O-phosphothioketal. Residues D330 and I352 each contribute to the UDP-N-acetyl-alpha-D-glucosamine site.

This sequence belongs to the EPSP synthase family. MurA subfamily.

The protein localises to the cytoplasm. The enzyme catalyses phosphoenolpyruvate + UDP-N-acetyl-alpha-D-glucosamine = UDP-N-acetyl-3-O-(1-carboxyvinyl)-alpha-D-glucosamine + phosphate. The protein operates within cell wall biogenesis; peptidoglycan biosynthesis. Functionally, cell wall formation. Adds enolpyruvyl to UDP-N-acetylglucosamine. The chain is UDP-N-acetylglucosamine 1-carboxyvinyltransferase 1 from Symbiobacterium thermophilum (strain DSM 24528 / JCM 14929 / IAM 14863 / T).